The following is a 670-amino-acid chain: Amyloid beta A4 precursor protein-binding family B member 1-interacting protein (670 aa).

S55 is modified (phosphoserine). Residues 179-266 form the Ras-associating domain; it reads KKLVVKVHMD…KVLFLEKEER (88 aa). The region spanning 313 to 422 is the PH domain; sequence VPELEGALYL…WVMGIRIAKY (110 aa). Residues 449 to 653 are disordered; it reads VGTPMPAQPS…PGAPGNSEQD (205 aa). The segment covering 456 to 475 has biased composition (polar residues); it reads QPSTVSSGLKTGTSQPNGQM. S532 is modified (phosphoserine). A Phosphothreonine modification is found at T534. Position 537 is a phosphoserine (S537). Composition is skewed to pro residues over residues 553–567, 576–599, 606–615, and 625–634; these read PHPP…PPPP, LPPP…PPPA, LPPPPPPPPC, and PLPPKKPLVP.

Belongs to the MRL family. In terms of assembly, interacts, through the N-terminal Pro-rich region, with the WW domain of APBB1. Interacts with RAP1A, PFN1, VASP and ENAH. As to expression, ubiquitously expressed with high expression in the hematopoietic system.

It localises to the cell membrane. Its subcellular location is the cell projection. The protein localises to the lamellipodium. It is found in the cell junction. The protein resides in the focal adhesion. It localises to the cytoplasm. Its subcellular location is the cytoskeleton. Appears to function in the signal transduction from Ras activation to actin cytoskeletal remodeling. Suppresses insulin-induced promoter activities through AP1 and SRE. Mediates Rap1-induced adhesion. This is Amyloid beta A4 precursor protein-binding family B member 1-interacting protein (Apbb1ip) from Mus musculus (Mouse).